A 295-amino-acid polypeptide reads, in one-letter code: Small ribosomal subunit protein uS2 (295 aa).

Residues 264–295 are disordered; it reads KFSKTKNIDEETNTEFEQALNDTDENKNADNA.

The protein belongs to the universal ribosomal protein uS2 family.

The chain is Small ribosomal subunit protein uS2 from Rickettsia akari (strain Hartford).